The following is a 281-amino-acid chain: Small ribosomal subunit protein uS3 (281 aa).

The region spanning 38-106 (IRRLLSTGLE…QVQLNILEVK (69 aa)) is the KH type-2 domain. A disordered region spans residues 218 to 281 (APAGAERARR…VTHEPQIAES (64 aa)). Residues 238 to 252 (SGAAGTTVTGTDAGR) are compositionally biased toward low complexity.

This sequence belongs to the universal ribosomal protein uS3 family. As to quaternary structure, part of the 30S ribosomal subunit. Forms a tight complex with proteins S10 and S14.

In terms of biological role, binds the lower part of the 30S subunit head. Binds mRNA in the 70S ribosome, positioning it for translation. The chain is Small ribosomal subunit protein uS3 from Mycobacterium leprae (strain TN).